We begin with the raw amino-acid sequence, 223 residues long: Germin-like protein subfamily 1 member 10 (223 aa).

A signal peptide spans 1–24 (MAMKSLSFLAALSLLALTLPLTIA). Cysteines 34 and 51 form a disulfide. Residue Asn38 is glycosylated (N-linked (GlcNAc...) asparagine). Positions 65–215 (PGLQTARPIT…AFQVDPRVVM (151 aa)) constitute a Cupin type-1 domain. Residues His113, His115, Glu120, and His161 each coordinate Mn(2+).

This sequence belongs to the germin family. Oligomer (believed to be a pentamer but probably hexamer).

The protein localises to the secreted. Its subcellular location is the extracellular space. The protein resides in the apoplast. In terms of biological role, may play a role in plant defense. Probably has no oxalate oxidase activity even if the active site is conserved. The polypeptide is Germin-like protein subfamily 1 member 10 (Arabidopsis thaliana (Mouse-ear cress)).